The sequence spans 860 residues: Leucine--tRNA ligase (860 aa).

A 'HIGH' region motif is present at residues 42–52 (PYPSGRLHMGH). The 'KMSKS' region motif lies at 619 to 623 (KMSKS). Lysine 622 lines the ATP pocket.

It belongs to the class-I aminoacyl-tRNA synthetase family.

The protein localises to the cytoplasm. The enzyme catalyses tRNA(Leu) + L-leucine + ATP = L-leucyl-tRNA(Leu) + AMP + diphosphate. The chain is Leucine--tRNA ligase from Yersinia enterocolitica serotype O:8 / biotype 1B (strain NCTC 13174 / 8081).